The chain runs to 322 residues: Ig gamma-2A chain C region (322 aa).

3 Ig-like domains span residues 6–98, 115–212, and 221–317; these read PSVY…KKIV, VFIF…KSIS, and PQVY…KSLS. Disulfide bonds link cysteine 27–cysteine 82, cysteine 136–cysteine 196, and cysteine 242–cysteine 300. An N-linked (GlcNAc...) asparagine glycan is attached at asparagine 172.

This Rattus norvegicus (Rat) protein is Ig gamma-2A chain C region (Igg-2a).